Consider the following 428-residue polypeptide: MAKTVAYFYDPDVGNFHYGAGHPMKPHRLALTHSLVLHYGLYKKMIVFKPYQASQHDMCRFHSEDYIDFLQRVSPTNMQGFTKSLNAFNVGDDCPVFPGLFEFCSRYTGASLQGATQLNNKICDIAINWAGGLHHAKKFEASGFCYVNDIVIGILELLKYHPRVLYIDIDIHHGDGVQEAFYLTDRVMTVSFHKYGNYFFPGTGDMYEVGAESGRYYCLNVPLRDGIDDQSYKHLFQPVISQVVDFYQPTCIVLQCGADSLGCDRLGCFNLSIRGHGECVEYVKSFNIPLLVLGGGGYTVRNVARCWTYETSLLVEEAISEELPYSEYFEYFAPDFTLHPDVSTRIENQNSRQYLDQIRQTIFENLKMLNHAPSVQIHDVPADLLTYDRTDEADAEERGPEENYSRPEAPNEFYDGDHDNDKESDVEI.

Residues 3–316 form a histone deacetylase region; it reads KTVAYFYDPD…WTYETSLLVE (314 aa). 1D-myo-inositol 1,4,5,6-tetrakisphosphate contacts are provided by His-17, Gly-21, and Lys-25. His-135 is an active-site residue. Zn(2+) contacts are provided by Asp-170, His-172, and Asp-259. Residue Arg-265 coordinates 1D-myo-inositol 1,4,5,6-tetrakisphosphate. Basic and acidic residues-rich tracts occupy residues 388–405 and 415–428; these read DRTDEADAEERGPEENYS and DGDHDNDKESDVEI. Residues 388 to 428 form a disordered region; that stretch reads DRTDEADAEERGPEENYSRPEAPNEFYDGDHDNDKESDVEI. Ser-424 bears the Phosphoserine mark.

Belongs to the histone deacetylase family. HD type 1 subfamily. As to quaternary structure, interacts with HDAC7 and HDAC9. Interacts with DAXX, KDM4A, HDAC10 and DACH1. Found in a complex with NCOR1 and NCOR2. Component of the N-Cor repressor complex, at least composed of NCOR1, NCOR2, HDAC3, TBL1X, TBL1R, CORO2A and GPS2. Interacts with BCOR, MJD2A/JHDM3A, NRIP1, PRDM6 and SRY. Interacts with BTBD14B. Interacts with GLIS2. Interacts (via the DNA-binding domain) with NR2C1; the interaction recruits phosphorylated NR2C1 to PML bodies for sumoylation. Component of the Notch corepressor complex. Interacts with CBFA2T3 and NKAP. Interacts with APEX1; the interaction is not dependent on the acetylated status of APEX1. Interacts with ZMYND15. Interacts with SMRT/NCOR2 and BCL6 on DNA enhancer elements. Interacts with INSM1. Interacts with XBP1 isoform 1; the interaction occurs in endothelial cell (EC) under disturbed flow. Interacts (via C-terminus) with CCAR2 (via N-terminus). Interacts with and deacetylates MEF2D. Interacts with BEND3. Interacts with NKAPL. Interacts with DHX36; this interaction occurs in a RNA-dependent manner. Interacts weakly with CRY1; this interaction is enhanced in the presence of FBXL3. Interacts with FBXL3 and BMAL1. Interacts with NCOR1. Interacts with RARA. Interacts with SETD5. Sumoylated in vitro. In terms of processing, deubiquitinated on 'Lys-63'-linked ubiquitin chains by USP38; leading to a decreased level of histone acetylation.

It is found in the nucleus. The protein resides in the chromosome. It localises to the cytoplasm. Its subcellular location is the cytosol. The enzyme catalyses N(6)-acetyl-L-lysyl-[histone] + H2O = L-lysyl-[histone] + acetate. It catalyses the reaction N(6)-acetyl-L-lysyl-[protein] + H2O = L-lysyl-[protein] + acetate. It carries out the reaction N(6)-(2E)-butenoyl-L-lysyl-[protein] + H2O = (2E)-2-butenoate + L-lysyl-[protein]. The catalysed reaction is N(6)-(2-hydroxyisobutanoyl)-L-lysyl-[protein] + H2O = 2-hydroxy-2-methylpropanoate + L-lysyl-[protein]. The enzyme catalyses N(6)-[(S)-lactoyl]-L-lysyl-[protein] + H2O = (S)-lactate + L-lysyl-[protein]. Inositol tetraphosphate (1D-myo-inositol 1,4,5,6-tetrakisphosphate) promotes the histone deacetylase activity by acting as an intermolecular glue between HDAC3 and NCOR2, thereby promoting its association with the N-Cor complex, a prerequisite for the histone deacetylase activity. Functionally, histone deacetylase that catalyzes the deacetylation of lysine residues on the N-terminal part of the core histones (H2A, H2B, H3 and H4), and some other non-histone substrates. Histone deacetylation gives a tag for epigenetic repression and plays an important role in transcriptional regulation, cell cycle progression and developmental events. Histone deacetylases act via the formation of large multiprotein complexes, such as N-Cor repressor complex, which activate the histone deacetylase activity. Participates in the BCL6 transcriptional repressor activity by deacetylating the H3 'Lys-27' (H3K27) on enhancer elements, antagonizing EP300 acetyltransferase activity and repressing proximal gene expression. Acts as a molecular chaperone for shuttling phosphorylated NR2C1 to PML bodies for sumoylation. Contributes, together with XBP1 isoform 1, to the activation of NFE2L2-mediated HMOX1 transcription factor gene expression in a PI(3)K/mTORC2/Akt-dependent signaling pathway leading to endothelial cell (EC) survival under disturbed flow/oxidative stress. Regulates both the transcriptional activation and repression phases of the circadian clock in a deacetylase activity-independent manner. During the activation phase, promotes the accumulation of ubiquitinated BMAL1 at the E-boxes and during the repression phase, blocks FBXL3-mediated CRY1/2 ubiquitination and promotes the interaction of CRY1 and BMAL1. The NCOR1-HDAC3 complex regulates the circadian expression of the core clock gene BMAL1 and the genes involved in lipid metabolism in the liver. Also functions as deacetylase for non-histone targets, such as KAT5, MEF2D, MAPK14, RARA and STAT3. Serves as a corepressor of RARA, mediating its deacetylation and repression, leading to inhibition of RARE DNA element binding. In addition to protein deacetylase activity, also acts as a protein-lysine deacylase by recognizing other acyl groups: catalyzes removal of (2E)-butenoyl (crotonyl), lactoyl (lactyl) and 2-hydroxyisobutanoyl (2-hydroxyisobutyryl) acyl groups from lysine residues, leading to protein decrotonylation, delactylation and de-2-hydroxyisobutyrylation, respectively. Catalyzes decrotonylation of MAPRE1/EB1. Mediates delactylation NBN/NBS1, thereby inhibiting DNA double-strand breaks (DSBs) via homologous recombination (HR). This is Histone deacetylase 3 from Mus musculus (Mouse).